Consider the following 381-residue polypeptide: E3 ubiquitin-protein ligase At1g63170 (381 aa).

Residues 1–23 (MSRETTTEATPLILTDGGGGRRS) are disordered. A run of 2 helical transmembrane segments spans residues 74-94 (VVVL…AVLV) and 107-127 (VWII…CVEY). The segment at 135–161 (RRDLSPRSSSSSSSSSSSMDEEEGLGL) is disordered. The span at 140 to 152 (PRSSSSSSSSSSS) shows a compositional bias: low complexity. A coiled-coil region spans residues 170 to 194 (LELGQLENENNSFAKHLESANTMIS). Transmembrane regions (helical) follow at residues 189–209 (ANTM…SSGG), 224–244 (IVFL…ACVI), and 245–265 (GIAV…VAEQ). The RING-type; atypical zinc-finger motif lies at 325 to 366 (CCICLSAYEDETELRELPCGHHFHCGCVDKWLYINATCPLCK).

Its subcellular location is the membrane. The enzyme catalyses S-ubiquitinyl-[E2 ubiquitin-conjugating enzyme]-L-cysteine + [acceptor protein]-L-lysine = [E2 ubiquitin-conjugating enzyme]-L-cysteine + N(6)-ubiquitinyl-[acceptor protein]-L-lysine.. The protein operates within protein modification; protein ubiquitination. Mediates E2-dependent protein ubiquitination. The chain is E3 ubiquitin-protein ligase At1g63170 from Arabidopsis thaliana (Mouse-ear cress).